The chain runs to 218 residues: Protein GrpE (218 aa).

The segment covering 1-10 has biased composition (polar residues); sequence MSGEASTPAQ. 2 disordered regions span residues 1–44 and 198–218; these read MSGE…DPAE and SMGPGPSADAEGAASAEAEDS. Residues 200-218 are compositionally biased toward low complexity; it reads GPGPSADAEGAASAEAEDS.

It belongs to the GrpE family. As to quaternary structure, homodimer.

The protein resides in the cytoplasm. Participates actively in the response to hyperosmotic and heat shock by preventing the aggregation of stress-denatured proteins, in association with DnaK and GrpE. It is the nucleotide exchange factor for DnaK and may function as a thermosensor. Unfolded proteins bind initially to DnaJ; upon interaction with the DnaJ-bound protein, DnaK hydrolyzes its bound ATP, resulting in the formation of a stable complex. GrpE releases ADP from DnaK; ATP binding to DnaK triggers the release of the substrate protein, thus completing the reaction cycle. Several rounds of ATP-dependent interactions between DnaJ, DnaK and GrpE are required for fully efficient folding. The chain is Protein GrpE from Parasynechococcus marenigrum (strain WH8102).